An 88-amino-acid polypeptide reads, in one-letter code: Phosphocarrier protein HPr (88 aa).

Residues 1 to 88 (MAEKTFKVVS…DTLAKEGLAE (88 aa)) enclose the HPr domain. Ser-12 carries the post-translational modification Phosphoserine. His-15 (pros-phosphohistidine intermediate) is an active-site residue. Ser-46 is modified (phosphoserine; by HPrK/P).

This sequence belongs to the HPr family.

Its subcellular location is the cytoplasm. With respect to regulation, phosphorylation on Ser-46 inhibits the phosphoryl transfer from enzyme I to HPr. Its function is as follows. General (non sugar-specific) component of the phosphoenolpyruvate-dependent sugar phosphotransferase system (sugar PTS). This major carbohydrate active-transport system catalyzes the phosphorylation of incoming sugar substrates concomitantly with their translocation across the cell membrane. The phosphoryl group from phosphoenolpyruvate (PEP) is transferred to the phosphoryl carrier protein HPr by enzyme I. Phospho-HPr then transfers it to the PTS EIIA domain. In terms of biological role, P-Ser-HPr interacts with the catabolite control protein A (CcpA), forming a complex that binds to DNA at the catabolite response elements cre, operator sites preceding a large number of catabolite-regulated genes. Thus, P-Ser-HPr is a corepressor in carbon catabolite repression (CCR), a mechanism that allows bacteria to coordinate and optimize the utilization of available carbon sources. P-Ser-HPr also plays a role in inducer exclusion, in which it probably interacts with several non-PTS permeases and inhibits their transport activity. This chain is Phosphocarrier protein HPr (ptsH), found in Geobacillus stearothermophilus (Bacillus stearothermophilus).